A 336-amino-acid polypeptide reads, in one-letter code: Flap endonuclease 1 (336 aa).

Residues 1-98 (MGVDLGDILS…GTLAARAQMK (98 aa)) are N-domain. Mg(2+) contacts are provided by Asp27, Asp80, Glu150, Glu152, Asp171, Asp173, and Asp234. The segment at 114–255 (DSFRYAQATA…RALKLIREHG (142 aa)) is I-domain. The interval 328–336 (GQSTLERWL) is interaction with PCNA.

The protein belongs to the XPG/RAD2 endonuclease family. FEN1 subfamily. In terms of assembly, interacts with PCNA. PCNA stimulates the nuclease activity without altering cleavage specificity. Requires Mg(2+) as cofactor.

Functionally, structure-specific nuclease with 5'-flap endonuclease and 5'-3' exonuclease activities involved in DNA replication and repair. During DNA replication, cleaves the 5'-overhanging flap structure that is generated by displacement synthesis when DNA polymerase encounters the 5'-end of a downstream Okazaki fragment. Binds the unpaired 3'-DNA end and kinks the DNA to facilitate 5' cleavage specificity. Cleaves one nucleotide into the double-stranded DNA from the junction in flap DNA, leaving a nick for ligation. Also involved in the base excision repair (BER) pathway. Acts as a genome stabilization factor that prevents flaps from equilibrating into structures that lead to duplications and deletions. Also possesses 5'-3' exonuclease activity on nicked or gapped double-stranded DNA. The chain is Flap endonuclease 1 from Methanothrix thermoacetophila (strain DSM 6194 / JCM 14653 / NBRC 101360 / PT) (Methanosaeta thermophila).